The sequence spans 119 residues: Large ribosomal subunit protein bL20 (119 aa).

Belongs to the bacterial ribosomal protein bL20 family.

Functionally, binds directly to 23S ribosomal RNA and is necessary for the in vitro assembly process of the 50S ribosomal subunit. It is not involved in the protein synthesizing functions of that subunit. The chain is Large ribosomal subunit protein bL20 from Delftia acidovorans (strain DSM 14801 / SPH-1).